The following is a 154-amino-acid chain: Insulin-like growth factor 1 (154 aa).

The tract at residues 50 to 78 (GPETLCGAELVDALQFVCGDRGFYFNKPT) is b. Cystine bridges form between cysteine 55–cysteine 97, cysteine 67–cysteine 110, and cysteine 96–cysteine 101. The segment at 79–90 (GYGSSSRRAPQT) is c. The a stretch occupies residues 91–111 (GIVDECCFRSCDLRRLEMYCA). A d region spans residues 112–119 (PLKPAKSA). Residues 120–154 (RSVRAQRHTDMPKAQKEVHLKNTSRGSAGNKNYRM) constitute a propeptide, e peptide. The disordered stretch occupies residues 121 to 154 (SVRAQRHTDMPKAQKEVHLKNTSRGSAGNKNYRM). Over residues 126 to 139 (RHTDMPKAQKEVHL) the composition is skewed to basic and acidic residues. A compositionally biased stretch (polar residues) spans 140-154 (KNTSRGSAGNKNYRM).

Belongs to the insulin family. In terms of assembly, forms a ternary complex with IGFR1 and ITGAV:ITGB3. Forms a ternary complex with IGFR1 and ITGA6:ITGB4. Forms a ternary complex with IGFBP3 and ALS.

The protein resides in the secreted. The insulin-like growth factors, isolated from plasma, are structurally and functionally related to insulin but have a much higher growth-promoting activity. May be a physiological regulator of [1-14C]-2-deoxy-D-glucose (2DG) transport and glycogen synthesis in osteoblasts. Stimulates glucose transport in bone-derived osteoblastic (PyMS) cells and is effective at much lower concentrations than insulin, not only regarding glycogen and DNA synthesis but also with regard to enhancing glucose uptake. May play a role in synapse maturation. Ca(2+)-dependent exocytosis of IGF1 is required for sensory perception of smell in the olfactory bulb. Acts as a ligand for IGF1R. Binds to the alpha subunit of IGF1R, leading to the activation of the intrinsic tyrosine kinase activity which autophosphorylates tyrosine residues in the beta subunit thus initiating a cascade of down-stream signaling events leading to activation of the PI3K-AKT/PKB and the Ras-MAPK pathways. Binds to integrins ITGAV:ITGB3 and ITGA6:ITGB4. Its binding to integrins and subsequent ternary complex formation with integrins and IGFR1 are essential for IGF1 signaling. Induces the phosphorylation and activation of IGFR1, MAPK3/ERK1, MAPK1/ERK2 and AKT1. As part of the MAPK/ERK signaling pathway, acts as a negative regulator of apoptosis in cardiomyocytes via promotion of STUB1/CHIP-mediated ubiquitination and degradation of ICER-type isoforms of CREM. This Bos taurus (Bovine) protein is Insulin-like growth factor 1.